The primary structure comprises 324 residues: Adenine deaminase (324 aa).

3 residues coordinate Zn(2+): histidine 8, histidine 10, and histidine 186. The active-site Proton donor is the glutamate 189. Aspartate 267 serves as a coordination point for Zn(2+). A substrate-binding site is contributed by aspartate 268.

The protein belongs to the metallo-dependent hydrolases superfamily. Adenosine and AMP deaminases family. Adenine deaminase type 2 subfamily. Requires Zn(2+) as cofactor.

It carries out the reaction adenine + H2O + H(+) = hypoxanthine + NH4(+). In terms of biological role, catalyzes the hydrolytic deamination of adenine to hypoxanthine. Plays an important role in the purine salvage pathway and in nitrogen catabolism. This Mesorhizobium japonicum (strain LMG 29417 / CECT 9101 / MAFF 303099) (Mesorhizobium loti (strain MAFF 303099)) protein is Adenine deaminase.